The chain runs to 340 residues: GTP 3',8-cyclase (340 aa).

The Radical SAM core domain maps to 8-227 (KLGRPIRDLR…TMIEQHFEID (220 aa)). Residue R17 participates in GTP binding. C24 and C28 together coordinate [4Fe-4S] cluster. Residue Y30 participates in S-adenosyl-L-methionine binding. C31 serves as a coordination point for [4Fe-4S] cluster. R71 contacts GTP. Position 75 (G75) interacts with S-adenosyl-L-methionine. GTP is bound at residue T102. S126 serves as a coordination point for S-adenosyl-L-methionine. K163 contacts GTP. M197 provides a ligand contact to S-adenosyl-L-methionine. C261 and C264 together coordinate [4Fe-4S] cluster. 266-268 (RAR) contacts GTP. Residue C278 participates in [4Fe-4S] cluster binding.

The protein belongs to the radical SAM superfamily. MoaA family. In terms of assembly, monomer and homodimer. [4Fe-4S] cluster serves as cofactor.

The enzyme catalyses GTP + AH2 + S-adenosyl-L-methionine = (8S)-3',8-cyclo-7,8-dihydroguanosine 5'-triphosphate + 5'-deoxyadenosine + L-methionine + A + H(+). Its pathway is cofactor biosynthesis; molybdopterin biosynthesis. In terms of biological role, catalyzes the cyclization of GTP to (8S)-3',8-cyclo-7,8-dihydroguanosine 5'-triphosphate. The chain is GTP 3',8-cyclase from Staphylococcus aureus (strain Mu3 / ATCC 700698).